Here is a 208-residue protein sequence, read N- to C-terminus: Ras-related protein M-Ras (208 aa).

GTP is bound by residues aspartate 21, glycine 22, glycine 23, valine 24, glycine 25, lysine 26, serine 27, alanine 28, phenylalanine 38, valine 39, proline 40, tyrosine 42, proline 44, and threonine 45. Serine 27 serves as a coordination point for Mg(2+). Positions 42–50 (YDPTIEDSY) match the Effector region motif. Mg(2+) contacts are provided by threonine 45 and aspartate 67. 7 residues coordinate GTP: glycine 70, asparagine 126, lysine 127, aspartate 129, serine 156, alanine 157, and lysine 158. The residue at position 205 (cysteine 205) is a Cysteine methyl ester. Residue cysteine 205 is the site of S-geranylgeranyl cysteine attachment. A propeptide spans 206–208 (VIL) (removed in mature form).

The protein belongs to the small GTPase superfamily. Ras family. As to quaternary structure, component of the SHOC2-MRAS-PP1c (SMP) holophosphatase complex consisting of SHOC2, GTP-bound M-Ras/MRAS and the catalytic subunit of protein phosphatase 1 (either PPP1CA, PPP1CB or PPP1CC). Interacts (active GTP-bound form) with both SHOC2 and PP1c (all isoforms) to form a tertiary complex; SHOC2 and PP1c preferably bind M-Ras/MRAS, but they also bind K-Ras/KRAS, N-Ras/NRAS and H-Ras/HRAS. Interacts with RGL3. Interacts (active GTP-bound form preferentially) with RGS14. It depends on Mg(2+) as a cofactor. As to expression, expression highly restricted to the brain and heart.

The protein localises to the cell membrane. It carries out the reaction GTP + H2O = GDP + phosphate + H(+). Signal transducer in the Ras-MAPK signaling pathway that regulates cell proliferation and survival. Core component of the SHOC2-MRAS-PP1c (SMP) holophosphatase complex that regulates the MAPK pathway activation. The formation of the SMP complex only occurs when MRAS is GTP-bound. MRAS has low intrinsic GTPase activity and may require additional factors for activation. The SMP complex specifically dephosphorylates the inhibitory phosphorylation at 'Ser-259' of RAF1 kinase, 'Ser-365' of BRAF kinase and 'Ser-214' of ARAF kinase, stimulating their kinase activities. This chain is Ras-related protein M-Ras (MRAS), found in Homo sapiens (Human).